The primary structure comprises 480 residues: MIVADSECRAELKDYLRFAPGGVGDSGPGEEQRESRARRGPRGPSAFIPVEEVLREGAESLEQHLGLEALMSSGRVDNLAVVMGLHPDYFTSFWRLHYLPLHTDGPLASSWRHYIAIMAAARHQCSYLVGSHMAEFLQTGGDPEWLLGLHRAPEKLRKLSEINKLLAHRPWLITKEHIQALLKTGEHTWSLAELIQALVLLTHCHSLSSFVFGCGILPEGDADGSPAPQAPTPPSEQSSPPSRDPLNNSGGFESARDVEALMERMRQLQESLLRDEGTSQEEMESRFELEKSESLLVTPSADILEPSPHPDMLCFVEDPAFGYEDFTRRGAQAPPTFRAQDYTWEDHGYSLIQRLYPEGGQLLDEKFQAAYSLTYNTIAMLSGVDTSVLRRAIWNYIHCVFGIRYDDYDYGEVNQLLERNLKVYIKTVACYPEKTTRRMYNLFWRHFRHSEKVHVNLLLLEARMQAALLYALRAITRYMT.

Met-1 carries the N-acetylmethionine modification. Residues 20-45 (PGGVGDSGPGEEQRESRARRGPRGPS) form a disordered region. The segment at 66–239 (GLEALMSSGR…APTPPSEQSS (174 aa)) is N-terminal domain; mediates the alkylhydroperoxide reductase activity. Cys-125 functions as the Cysteine sulfenic acid (-SOH) intermediate in the catalytic mechanism. A Glycyl lysine isopeptide (Lys-Gly) (interchain with G-Cter in ubiquitin) cross-link involves residue Lys-175. Residues 222 to 252 (ADGSPAPQAPTPPSEQSSPPSRDPLNNSGGF) are disordered. At Ser-249 the chain carries Phosphoserine. The segment at 308-480 (PHPDMLCFVE…ALRAITRYMT (173 aa)) is C-terminal domain; mediates TORC1 regulation. L-leucine contacts are provided by residues 374–377 (TYNT), Thr-386, and Glu-451.

The protein belongs to the sestrin family. In terms of assembly, interacts with the GATOR2 complex which is composed of MIOS, SEC13, SEH1L, WDR24 and WDR59; the interaction is negatively regulated by leucine. Conveys leucine availability via direct interaction with SEH1L and WDR24 components of the GATOR2 complex. Interacts with RRAGA, RRAGB, RRAGC and RRAGD; may function as a guanine nucleotide dissociation inhibitor for RRAGs and regulate them. May interact with the TORC2 complex. Interacts with KEAP1, RBX1, SQSTM and ULK1; to regulate the degradation of KEAP1. May also associate with the complex composed of TSC1, TSC2 and the AMP-responsive protein kinase/AMPK to regulate TORC1 signaling. May interact with PRDX1. Post-translationally, phosphorylated by ULK1 at multiple sites. In terms of processing, ubiquitinated at Lys-175 by RNF167 via 'Lys-63'-linked polyubiquitination in response to leucine deprivation: ubiquitination promotes SESN2-interaction with the GATOR2 complex, leading to inhibit the TORC1 signaling pathway. Deubiquitinated at Lys-175 by STAMBPL1, promoting the TORC1 signaling pathway. Ubiquitinated by RNF186; ubiquitination mediates proteasomal degradation.

The protein resides in the cytoplasm. It catalyses the reaction a hydroperoxide + L-cysteinyl-[protein] = S-hydroxy-L-cysteinyl-[protein] + an alcohol. Functions as an intracellular leucine sensor that negatively regulates the mTORC1 signaling pathway through the GATOR complex. In absence of leucine, binds the GATOR subcomplex GATOR2 and prevents mTORC1 signaling. Binding of leucine to SESN2 disrupts its interaction with GATOR2 thereby activating the TORC1 signaling pathway. This stress-inducible metabolic regulator also plays a role in protection against oxidative and genotoxic stresses. May negatively regulate protein translation in response to endoplasmic reticulum stress, via mTORC1. May positively regulate the transcription by NFE2L2 of genes involved in the response to oxidative stress by facilitating the SQSTM1-mediated autophagic degradation of KEAP1. May also mediate TP53 inhibition of TORC1 signaling upon genotoxic stress. Moreover, may prevent the accumulation of reactive oxygen species (ROS) through the alkylhydroperoxide reductase activity born by the N-terminal domain of the protein. Was originally reported to contribute to oxidative stress resistance by reducing PRDX1. However, this could not be confirmed. The polypeptide is Sestrin-2 (Pongo abelii (Sumatran orangutan)).